Consider the following 260-residue polypeptide: Triosephosphate isomerase (260 aa).

Residue 11 to 13 (NWK) coordinates substrate. Catalysis depends on H103, which acts as the Electrophile. The active-site Proton acceptor is the E175. Substrate contacts are provided by residues G181, S220, and 241–242 (GG).

This sequence belongs to the triosephosphate isomerase family. As to quaternary structure, homodimer.

It is found in the cytoplasm. It carries out the reaction D-glyceraldehyde 3-phosphate = dihydroxyacetone phosphate. Its pathway is carbohydrate biosynthesis; gluconeogenesis. It functions in the pathway carbohydrate degradation; glycolysis; D-glyceraldehyde 3-phosphate from glycerone phosphate: step 1/1. Involved in the gluconeogenesis. Catalyzes stereospecifically the conversion of dihydroxyacetone phosphate (DHAP) to D-glyceraldehyde-3-phosphate (G3P). This chain is Triosephosphate isomerase, found in Shewanella piezotolerans (strain WP3 / JCM 13877).